A 220-amino-acid chain; its full sequence is Large ribosomal subunit protein uL3 (220 aa).

Residues 113 to 143 (GTTKGHGYQGNIHKDGQRRGPMAHGSRYHRR) are disordered.

Belongs to the universal ribosomal protein uL3 family. In terms of assembly, part of the 50S ribosomal subunit. Forms a cluster with proteins L14 and L19.

Functionally, one of the primary rRNA binding proteins, it binds directly near the 3'-end of the 23S rRNA, where it nucleates assembly of the 50S subunit. The polypeptide is Large ribosomal subunit protein uL3 (Limosilactobacillus fermentum (strain NBRC 3956 / LMG 18251) (Lactobacillus fermentum)).